A 283-amino-acid polypeptide reads, in one-letter code: Pantothenate synthetase (283 aa).

An ATP-binding site is contributed by 30–37; the sequence is MGNLHSGH. The active-site Proton donor is histidine 37. Glutamine 61 contributes to the (R)-pantoate binding site. Glutamine 61 contributes to the beta-alanine binding site. Position 149-152 (149-152) interacts with ATP; sequence GEKD. Glutamine 155 serves as a coordination point for (R)-pantoate. ATP-binding positions include valine 178 and 186–189; that span reads LSSR.

This sequence belongs to the pantothenate synthetase family. As to quaternary structure, homodimer.

The protein localises to the cytoplasm. It carries out the reaction (R)-pantoate + beta-alanine + ATP = (R)-pantothenate + AMP + diphosphate + H(+). It participates in cofactor biosynthesis; (R)-pantothenate biosynthesis; (R)-pantothenate from (R)-pantoate and beta-alanine: step 1/1. In terms of biological role, catalyzes the condensation of pantoate with beta-alanine in an ATP-dependent reaction via a pantoyl-adenylate intermediate. The sequence is that of Pantothenate synthetase from Pseudomonas savastanoi pv. phaseolicola (strain 1448A / Race 6) (Pseudomonas syringae pv. phaseolicola (strain 1448A / Race 6)).